A 21-amino-acid polypeptide reads, in one-letter code: Cyanophlyctin (21 aa).

In terms of tissue distribution, expressed by the skin glands.

The protein localises to the secreted. Its function is as follows. Has antibacterial activity against E.coli HP101BA (MIC=6.4 uM), K.pneumoniae PTCC1388 (MIC=7.3 uM), M.luteus PTCC1625 (MIC=4.7 uM) and S.aureus PTCC1431 (MIC=5.3 uM). Has no or very limited (&lt;3%) hemolytic activity at concentrations of 15 ug/ml and 60 ug/ml, respectively. The chain is Cyanophlyctin from Euphlyctis cyanophlyctis (Skittering frog).